The following is a 418-amino-acid chain: 3-phosphoshikimate 1-carboxyvinyltransferase (418 aa).

Positions 26, 27, and 31 each coordinate 3-phosphoshikimate. Phosphoenolpyruvate is bound at residue Lys-26. Phosphoenolpyruvate is bound by residues Gly-97 and Arg-125. Positions 170, 171, 172, 297, 320, and 324 each coordinate 3-phosphoshikimate. Residue Gln-172 participates in phosphoenolpyruvate binding. Catalysis depends on Asp-297, which acts as the Proton acceptor. Phosphoenolpyruvate is bound by residues Arg-328, Arg-375, and Lys-400.

Belongs to the EPSP synthase family. In terms of assembly, monomer.

The protein localises to the cytoplasm. The catalysed reaction is 3-phosphoshikimate + phosphoenolpyruvate = 5-O-(1-carboxyvinyl)-3-phosphoshikimate + phosphate. It functions in the pathway metabolic intermediate biosynthesis; chorismate biosynthesis; chorismate from D-erythrose 4-phosphate and phosphoenolpyruvate: step 6/7. Catalyzes the transfer of the enolpyruvyl moiety of phosphoenolpyruvate (PEP) to the 5-hydroxyl of shikimate-3-phosphate (S3P) to produce enolpyruvyl shikimate-3-phosphate and inorganic phosphate. This chain is 3-phosphoshikimate 1-carboxyvinyltransferase, found in Pseudomonas syringae pv. tomato (strain ATCC BAA-871 / DC3000).